The sequence spans 88 residues: MANSPQAKKRARQNDKARAHNASLRSMVRTYLKKVVAAIEAGDAEAAKKAYVAAVPVIDRMADKGIIHKNKAARHKSRLNAQIKGLAA.

A disordered region spans residues 1–23; the sequence is MANSPQAKKRARQNDKARAHNAS.

It belongs to the bacterial ribosomal protein bS20 family.

In terms of biological role, binds directly to 16S ribosomal RNA. The protein is Small ribosomal subunit protein bS20 of Teredinibacter turnerae (strain ATCC 39867 / T7901).